A 214-amino-acid chain; its full sequence is Ribonuclease HII (214 aa).

The region spanning Ser27–Val214 is the RNase H type-2 domain. A divalent metal cation-binding residues include Asp33, Glu34, and Asp126.

Belongs to the RNase HII family. Mn(2+) serves as cofactor. Requires Mg(2+) as cofactor.

It localises to the cytoplasm. The catalysed reaction is Endonucleolytic cleavage to 5'-phosphomonoester.. Endonuclease that specifically degrades the RNA of RNA-DNA hybrids. In Chlamydia pneumoniae (Chlamydophila pneumoniae), this protein is Ribonuclease HII (rnhB).